A 230-amino-acid chain; its full sequence is Voltage-gated hydrogen channel 1 (230 aa).

At 1 to 58 (MAGCLRHFTSVGDDTKKKAWKEEDVEVAHEEEPKNTPHPFIASYSFRGALKWLFSSHK) the chain is on the cytoplasmic side. The chain crosses the membrane as a helical span at residues 59 to 79 (FQIVIICLVILDALFVLVEVL). Residues 80–96 (LDLELLAEKVDHIIPEI) lie on the Extracellular side of the membrane. The helical transmembrane segment at 97–119 (FHYLSISVLSFFILEIAGKLYAF) threads the bilayer. Topologically, residues 120 to 127 (RLEFFHHK) are cytoplasmic. The chain crosses the membrane as a helical span at residues 128–148 (FEVFDAAIVVISFIIDIVYIS). Residues 149–155 (REDIFNA) lie on the Extracellular side of the membrane. A helical transmembrane segment spans residues 156–176 (VGLLILLRLWRVARIVNGIIV). Positions 177–226 (SVKTQAEDKIHRLKENQESLLEKVAHLEQQCAQQEQEIVRLQTLLQQHNV) form a coiled coil. Residues 177 to 230 (SVKTQAEDKIHRLKENQESLLEKVAHLEQQCAQQEQEIVRLQTLLQQHNVFPAS) lie on the Cytoplasmic side of the membrane.

Belongs to the hydrogen channel family. As to quaternary structure, homodimer.

Its subcellular location is the membrane. It localises to the cell membrane. Functionally, mediates the voltage-dependent proton permeability of excitable membranes. Forms a proton-selective channel through which protons may pass in accordance with their electrochemical gradient. This Xenopus tropicalis (Western clawed frog) protein is Voltage-gated hydrogen channel 1 (hvcn1).